The following is a 1379-amino-acid chain: MAERANLVFHNKVIDGTAIKRLISRLIDHFGMAYTSHILDQVKTLGFQQATATSISLGIDDLLTIPSKGWLVQDAEQQSWILEKHHHYGNVHAVEKLRQSIEIWYATSEYLRQEMNPNFRMTDPFNPVHMMSFSGARGNASQVHQLVGMRGLMSDPQGQMIDLPIQSNLREGLSLTEYIISCYGARKGVVDTAVRTSDAGYLTRRLVEVVQHIVVRRTDCGTIRGISVSPRNKNRMMSERIFIQTLIGRVLADDIYIGSRCVAFRNQDLGIGLVNRLITFGTQSISIRTPFTCRSTSWICRLCYGRSPTHGDLVELGEAVGIIAGQSIGEPGTQLTLRTFHTGGVFTGGTAEHVRAPYSGKIKFNEDLVHPTRTRHGHPAFLCYIDLSVIIESEDIIHSVTIPPKSFLLVQNDQYVESEQVIAEIREGTYTFHFKERVRKYIYSDSEGEMHWSTDVSHAPEFTYSNVHLLPKTSHLWILSGGSCGSSLIFFSIHKDQDQMNIPFLSVERKSISSLSVNNDQVSQKVLSSDFADQTKFGIPDYSEFKGNLGTSHYNFIYSAIFHENSDLLAKRRRNRFLIPFQSIQEQEKEFIPHSGISIEIPINGIFRRNSIFAFFDDPRYRRKSSGILKYGTPKADSIIQKADMIEYRGVQKFKTKYEMKVDRFFFIPEEVHILPESSAIMVQNYSIIGVDTRLALNIRSQVGGLIRVERKKKRIELKIFSGDIHFPDKTDKISRHSGILIPPGRGKKNSKESKKFQNWIYVQRITPTKKKFFVLVRPVATYEIADSINLATLFPQDLFREKDNIQLRVFNYILYGNSKPTQGISDTSIQLVRTCLVLNWDQDNKNSSLEEVRAFFVEVSTKGLIRDFIRIGLVKSHISYIRKRNNSRDSGLISADHMNPFYSISPKAGILQQSLRQNHGTIRMFLNRNKESQSLLILSSSNCFRMGPFNHLKYHNVINQSITKNPLITIKNSSGPLGTATQISNFYSFLPLLTYNKISLIKYLKLDNLKYIFQVINSYLIDENGKIFNLDPYSNVVLNPFKLNWYFLHQNYHHNYCEETSTIISLGQLFCENVCIAKKEPHLKSGQVLIVQRDSVVIRSAKPYLATPGAKVHGHYREILYEGDTLVTFIYEKSRSGDITQGLPKVEQVLEVRSIDSISLNLEKRIKGWNKCITRILGIPWGFLIGAELTIVQSRISLVNKIQKVYRSQGVQIHNRHIEIIVRQITSKVLVSEEGMSNVFLPGELIGLLRAERTGRALEESICYRAVLLGITRASLNTQSFISEASFQETARVLAKAALRGRIDWLKGLKENVVLGGVIPAGTGFNKGLVHCSRQHTNILLEKKTKNLSLFEGDMRDILFYHREFCDSAISKSAFSRI.

Cys-220, Cys-293, Cys-300, and Cys-303 together coordinate Zn(2+).

The protein belongs to the RNA polymerase beta' chain family. RpoC2 subfamily. As to quaternary structure, in plastids the minimal PEP RNA polymerase catalytic core is composed of four subunits: alpha, beta, beta', and beta''. When a (nuclear-encoded) sigma factor is associated with the core the holoenzyme is formed, which can initiate transcription. The cofactor is Zn(2+).

The protein resides in the plastid. The protein localises to the chloroplast. It carries out the reaction RNA(n) + a ribonucleoside 5'-triphosphate = RNA(n+1) + diphosphate. Functionally, DNA-dependent RNA polymerase catalyzes the transcription of DNA into RNA using the four ribonucleoside triphosphates as substrates. The chain is DNA-directed RNA polymerase subunit beta'' from Olimarabidopsis pumila (Dwarf rocket).